Consider the following 475-residue polypeptide: Ribulose bisphosphate carboxylase large chain (475 aa).

Residues 1–2 constitute a propeptide that is removed on maturation; it reads MS. At Pro3 the chain carries N-acetylproline. N6,N6,N6-trimethyllysine is present on Lys14. Asn123 and Thr173 together coordinate substrate. The Proton acceptor role is filled by Lys175. Lys177 lines the substrate pocket. Residues Lys201, Asp203, and Glu204 each contribute to the Mg(2+) site. An N6-carboxylysine modification is found at Lys201. The active-site Proton acceptor is His294. Arg295, His327, and Ser379 together coordinate substrate.

The protein belongs to the RuBisCO large chain family. Type I subfamily. Heterohexadecamer of 8 large chains and 8 small chains; disulfide-linked. The disulfide link is formed within the large subunit homodimers. Mg(2+) is required as a cofactor. In terms of processing, the disulfide bond which can form in the large chain dimeric partners within the hexadecamer appears to be associated with oxidative stress and protein turnover.

Its subcellular location is the plastid. It localises to the chloroplast. The enzyme catalyses 2 (2R)-3-phosphoglycerate + 2 H(+) = D-ribulose 1,5-bisphosphate + CO2 + H2O. It carries out the reaction D-ribulose 1,5-bisphosphate + O2 = 2-phosphoglycolate + (2R)-3-phosphoglycerate + 2 H(+). RuBisCO catalyzes two reactions: the carboxylation of D-ribulose 1,5-bisphosphate, the primary event in carbon dioxide fixation, as well as the oxidative fragmentation of the pentose substrate in the photorespiration process. Both reactions occur simultaneously and in competition at the same active site. The protein is Ribulose bisphosphate carboxylase large chain of Pinus koraiensis (Korean pine).